Here is a 562-residue protein sequence, read N- to C-terminus: Vacuolar basic amino acid transporter 1 (562 aa).

The Vacuolar portion of the chain corresponds to 1–30 (MQTLDETSNLLPPPEEAEAPPLEQKFHEYN). A helical transmembrane segment spans residues 31 to 51 (LALPKFPILFSLWLGSFLSSL). Residues 52-100 (DSTIVANIMNRVAEEFSESSKKQWIATSFLLTNTAFQPLYGKLSDITGR) lie on the Cytoplasmic side of the membrane. Residues 101-121 (KSALLTAQFFFGLGCLLTCFA) form a helical membrane-spanning segment. Topologically, residues 122–131 (RNVTEFSIAR) are vacuolar. N-linked (GlcNAc...) asparagine glycosylation occurs at Asn-123. A helical transmembrane segment spans residues 132 to 152 (AICGIGAGGLNAISSIAVSDI). The Cytoplasmic portion of the chain corresponds to 153–166 (CTARERGVYQGYAN). A helical membrane pass occupies residues 167-187 (IVFGFGQLLGAPLGGVFIETI). Over 188–190 (GWR) the chain is Vacuolar. The chain crosses the membrane as a helical span at residues 191–211 (ALFGIQVPVIMLCSVLAIKNI). Residues 212–232 (NIKLFHVPPMKERYTLKNLSR) lie on the Cytoplasmic side of the membrane. Residues 233–253 (IDIFGSLSLVATISGVLFLCS) traverse the membrane as a helical segment. At 254–255 (SQ) the chain is on the vacuolar side. A helical transmembrane segment spans residues 256–276 (LNKLYLALFTIGSFIVFILVE). Residues 277–292 (RYYATEKILPFELLTR) lie on the Cytoplasmic side of the membrane. A helical membrane pass occupies residues 293–313 (SFCLSSAVTVISSFVVFGEIF). The Vacuolar segment spans residues 314 to 331 (RSPIYLQLLQNISVTKTG). N-linked (GlcNAc...) asparagine glycosylation occurs at Asn-324. A helical membrane pass occupies residues 332-352 (LFLIFPSISVAVGSLVTGWVL). Residues 353-365 (RNTKINLAHCAYQ) lie on the Cytoplasmic side of the membrane. Residues 366–386 (IIFGGMIMQLLGLGLGYFLLS) traverse the membrane as a helical segment. At 387–419 (HLNPDYTIYDMLESITFRSNSIWWKLIYVFASV) the chain is on the vacuolar side. The chain crosses the membrane as a helical span at residues 420–440 (LVSFGYACLLVATLVSIVFTV). Residues 441–448 (EKSQQGTM) are Cytoplasmic-facing. Residues 449–469 (TGVFYLWRSIGNVLGASLTLV) traverse the membrane as a helical segment. Residues 470-528 (SYENSLSSMLWNYMFKTKRDDEYHFTKKQYYSLINDSSYLRGPNFPTDIFVRILDVYKK) are Vacuolar-facing. The N-linked (GlcNAc...) asparagine glycan is linked to Asn-504. A helical membrane pass occupies residues 529–549 (AFLISYIPNIALAAVGIVLSL). Topologically, residues 550–562 (YLVKHTYKRSSSS) are cytoplasmic.

The protein belongs to the major facilitator superfamily.

The protein localises to the vacuole membrane. Transporter required for vacuolar uptake of at least histidine and lysine. This chain is Vacuolar basic amino acid transporter 1 (VBA1), found in Saccharomyces cerevisiae (strain ATCC 204508 / S288c) (Baker's yeast).